The chain runs to 349 residues: Isopentenyl-diphosphate delta-isomerase (349 aa).

12–13 (RK) contributes to the substrate binding site. FMN is bound by residues serine 69, 70-72 (SMT), serine 101, and asparagine 129. 101-103 (SQR) lines the substrate pocket. Glutamine 164 provides a ligand contact to substrate. Glutamate 165 is a binding site for Mg(2+). Residues lysine 196, threonine 226, 279-281 (GIR), and 300-301 (AA) contribute to the FMN site.

It belongs to the IPP isomerase type 2 family. As to quaternary structure, homooctamer. Dimer of tetramers. FMN is required as a cofactor. It depends on NADPH as a cofactor. Requires Mg(2+) as cofactor.

It is found in the cytoplasm. The catalysed reaction is isopentenyl diphosphate = dimethylallyl diphosphate. In terms of biological role, involved in the biosynthesis of isoprenoids. Catalyzes the 1,3-allylic rearrangement of the homoallylic substrate isopentenyl (IPP) to its allylic isomer, dimethylallyl diphosphate (DMAPP). The sequence is that of Isopentenyl-diphosphate delta-isomerase from Paracoccus zeaxanthinifaciens.